The primary structure comprises 143 residues: Cytochrome c-type biogenesis protein CcmE (143 aa).

Residues 1 to 8 (MTPVRRRK) are Cytoplasmic-facing. A helical; Signal-anchor for type II membrane protein membrane pass occupies residues 9-29 (LFILLFALSVLSAAAALVLYA). The Periplasmic segment spans residues 30–143 (LRQNISLFYT…KSALADKVKQ (114 aa)). Residues His-124 and Tyr-128 each coordinate heme.

Belongs to the CcmE/CycJ family.

Its subcellular location is the cell inner membrane. Functionally, heme chaperone required for the biogenesis of c-type cytochromes. Transiently binds heme delivered by CcmC and transfers the heme to apo-cytochromes in a process facilitated by CcmF and CcmH. The sequence is that of Cytochrome c-type biogenesis protein CcmE from Legionella pneumophila.